Consider the following 201-residue polypeptide: Ribonuclease HII (201 aa).

The RNase H type-2 domain maps to 15–201 (AIIAGVDEAG…FAPIKAYGAP (187 aa)). Residues Asp21, Glu22, and Asp113 each contribute to the a divalent metal cation site.

The protein belongs to the RNase HII family. It depends on Mn(2+) as a cofactor. Mg(2+) serves as cofactor.

The protein resides in the cytoplasm. It catalyses the reaction Endonucleolytic cleavage to 5'-phosphomonoester.. Its function is as follows. Endonuclease that specifically degrades the RNA of RNA-DNA hybrids. This chain is Ribonuclease HII, found in Bordetella pertussis (strain Tohama I / ATCC BAA-589 / NCTC 13251).